A 1004-amino-acid polypeptide reads, in one-letter code: 26S proteasome non-ATPase regulatory subunit 1 homolog A (1004 aa).

The residue at position 2 (Ala2) is an N-acetylalanine. A Glycyl lysine isopeptide (Lys-Gly) (interchain with G-Cter in ubiquitin) cross-link involves residue Lys166. 10 PC repeats span residues 412–447 (SATAGLGVIHRGHLQQGRSLMAPYLPQGGAGGGGSP), 452–485 (GALYALGLIHANHGEGIKQFLRDSLRSTNVEVIQ), 487–521 (GACLGLGLSALGTADEEIYDDVKSVLYTDSAVAGE), 522–555 (AAGISMGLLLVGTATEKASEMLAYAHETQHEKII), 557–590 (GLALGIALTVYGREEGADTLIEQMTRDQDPIIRY), 591–626 (GGMYALALAYSGTANNKAIRQLLHFAVSDVSDDVRR), 627–659 (TAVLALGFVLYSDPEQTPRIVSLLSESYNPHVR), 661–695 (GAALAVGISCAGTGLSEAISLLEPLTSDVVDFVRQ), 696–736 (GALI…DTMS), and 739–771 (GAILASGILDAGGRNVTIRLLSKTKHDKVTAVI). Disordered stretches follow at residues 858–905 (EQKA…KKAP) and 959–1004 (VLSL…EYAS). Ser896 is modified (phosphoserine). The span at 965–987 (APTSTASPATGTAAAAQGTPASA) shows a compositional bias: low complexity.

Belongs to the proteasome subunit S1 family. Component of the 19S regulatory particle (RP/PA700) base subcomplex of the 26S proteasome. The 26S proteasome is composed of a core protease (CP), known as the 20S proteasome, capped at one or both ends by the 19S regulatory particle (RP/PA700). The RP/PA700 complex is composed of at least 17 different subunits in two subcomplexes, the base and the lid, which form the portions proximal and distal to the 20S proteolytic core, respectively. As to expression, ubiquitous with highest expression in flowers.

Acts as a regulatory subunit of the 26 proteasome which is involved in the ATP-dependent degradation of ubiquitinated proteins. The sequence is that of 26S proteasome non-ATPase regulatory subunit 1 homolog A (RPN2A) from Arabidopsis thaliana (Mouse-ear cress).